A 395-amino-acid chain; its full sequence is Terminal nucleotidyltransferase 5B (395 aa).

It belongs to the TENT family.

It localises to the cytoplasm. The protein localises to the nucleus. It catalyses the reaction RNA(n) + ATP = RNA(n)-3'-adenine ribonucleotide + diphosphate. In terms of biological role, catalyzes the transfer of one adenosine molecule from an ATP to an mRNA poly(A) tail bearing a 3'-OH terminal group in an ATP hydrolysis-dependent manner and participates in cytoplasmic polyadenylation. May be involved in maintaining the translation efficiency of at least some genes through preventing degradation of their mRNAs. The polypeptide is Terminal nucleotidyltransferase 5B (Xenopus tropicalis (Western clawed frog)).